The chain runs to 509 residues: Methionine--tRNA ligase (509 aa).

The 'HIGH' region motif lies at tyrosine 12 to histidine 22. Residues lysine 295–serine 299 carry the 'KMSKS' region motif. Residue lysine 298 coordinates ATP.

This sequence belongs to the class-I aminoacyl-tRNA synthetase family. MetG type 2B subfamily. In terms of assembly, monomer.

It localises to the cytoplasm. The enzyme catalyses tRNA(Met) + L-methionine + ATP = L-methionyl-tRNA(Met) + AMP + diphosphate. Functionally, is required not only for elongation of protein synthesis but also for the initiation of all mRNA translation through initiator tRNA(fMet) aminoacylation. This Rickettsia bellii (strain RML369-C) protein is Methionine--tRNA ligase.